The sequence spans 578 residues: Alpha-(1,6)-fucosyltransferase (578 aa).

The Cytoplasmic segment spans residues 1 to 9 (MRPWTGSWR). The helical; Signal-anchor for type II membrane protein transmembrane segment at 10–30 (WIMLILFAWGTLLFYIGGHLV) threads the bilayer. Over 31–578 (RDNENPDHSS…KYPTYQEAEK (548 aa)) the chain is Lumenal. Intrachain disulfides connect Cys-207/Cys-269, Cys-215/Cys-233, and Cys-221/Cys-225. Residues 209–496 (KAKKLVCNIN…PDASAHFHSL (288 aa)) form the GT23 domain. The SH3-binding motif lies at 302 to 308 (PRPPYLP). Positions 368-369 (RR) are important for donor substrate binding. A disulfide bridge connects residues Cys-468 and Cys-475. The region spanning 505 to 566 (QNAHNQLAIY…PSYKVKEKIE (62 aa)) is the SH3 domain.

This sequence belongs to the glycosyltransferase 23 family.

The protein localises to the golgi apparatus. Its subcellular location is the golgi stack membrane. It catalyses the reaction N(4)-{beta-D-GlcNAc-(1-&gt;2)-alpha-D-Man-(1-&gt;3)-[beta-D-GlcNAc-(1-&gt;2)-alpha-D-Man-(1-&gt;6)]-beta-D-Man-(1-&gt;4)-beta-D-GlcNAc-(1-&gt;4)-beta-D-GlcNAc}-L-asparaginyl-[protein] + GDP-beta-L-fucose = an N(4)-{beta-D-GlcNAc-(1-&gt;2)-alpha-D-Man-(1-&gt;3)-[beta-D-GlcNAc-(1-&gt;2)-alpha-D-Man-(1-&gt;6)]-beta-D-Man-(1-&gt;4)-beta-D-GlcNAc-(1-&gt;4)-[alpha-L-Fuc-(1-&gt;6)]-beta-D-GlcNAc}-L-asparaginyl-[protein] + GDP + H(+). It functions in the pathway protein modification; protein glycosylation. Functionally, catalyzes the addition of fucose in alpha 1-6 linkage to the first GlcNAc residue, next to the peptide chains in N-glycans. The sequence is that of Alpha-(1,6)-fucosyltransferase (fut8) from Xenopus tropicalis (Western clawed frog).